The following is a 71-amino-acid chain: Small ribosomal subunit protein eS17 (71 aa).

This sequence belongs to the eukaryotic ribosomal protein eS17 family.

This Pyrobaculum aerophilum (strain ATCC 51768 / DSM 7523 / JCM 9630 / CIP 104966 / NBRC 100827 / IM2) protein is Small ribosomal subunit protein eS17.